The chain runs to 694 residues: uncharacterized protein (694 aa).

In terms of domain architecture, Resolvase/invertase-type recombinase catalytic spans D17 to G168. The active-site O-(5'-phospho-DNA)-serine intermediate is S25. The recombinase DNA-binding region spans P175–G316. The helical transmembrane segment at A386–V406 threads the bilayer.

It is found in the membrane. This is an uncharacterized protein from Sinorhizobium fredii (strain NBRC 101917 / NGR234).